We begin with the raw amino-acid sequence, 498 residues long: ATP synthase subunit beta, chloroplastic (498 aa).

At T6 the chain carries Phosphothreonine. The residue at position 13 (S13) is a Phosphoserine. ATP is bound at residue 172 to 179; sequence GGAGVGKT.

Belongs to the ATPase alpha/beta chains family. In terms of assembly, F-type ATPases have 2 components, CF(1) - the catalytic core - and CF(0) - the membrane proton channel. CF(1) has five subunits: alpha(3), beta(3), gamma(1), delta(1), epsilon(1). CF(0) has four main subunits: a(1), b(1), b'(1) and c(9-12).

It is found in the plastid. The protein resides in the chloroplast thylakoid membrane. The enzyme catalyses ATP + H2O + 4 H(+)(in) = ADP + phosphate + 5 H(+)(out). Its function is as follows. Produces ATP from ADP in the presence of a proton gradient across the membrane. The catalytic sites are hosted primarily by the beta subunits. In Draba nemorosa (Woodland whitlowgrass), this protein is ATP synthase subunit beta, chloroplastic.